The primary structure comprises 520 residues: GMP synthase [glutamine-hydrolyzing] (520 aa).

Residues 12-205 (KIIVLDYGSQ…AVNICGARGD (194 aa)) enclose the Glutamine amidotransferase type-1 domain. Residue cysteine 89 is the Nucleophile of the active site. Residues histidine 179 and glutamate 181 contribute to the active site. One can recognise a GMPS ATP-PPase domain in the interval 206–395 (WSMDNFIDME…LGMPDEVVWR (190 aa)). 233–239 (SGGVDSS) contacts ATP.

Homodimer.

It carries out the reaction XMP + L-glutamine + ATP + H2O = GMP + L-glutamate + AMP + diphosphate + 2 H(+). It participates in purine metabolism; GMP biosynthesis; GMP from XMP (L-Gln route): step 1/1. Catalyzes the synthesis of GMP from XMP. This chain is GMP synthase [glutamine-hydrolyzing], found in Streptococcus agalactiae serotype III (strain NEM316).